The sequence spans 310 residues: Porphobilinogen deaminase (310 aa).

S-(dipyrrolylmethanemethyl)cysteine is present on C241.

It belongs to the HMBS family. As to quaternary structure, monomer. Requires dipyrromethane as cofactor.

The catalysed reaction is 4 porphobilinogen + H2O = hydroxymethylbilane + 4 NH4(+). Its pathway is porphyrin-containing compound metabolism; protoporphyrin-IX biosynthesis; coproporphyrinogen-III from 5-aminolevulinate: step 2/4. Functionally, tetrapolymerization of the monopyrrole PBG into the hydroxymethylbilane pre-uroporphyrinogen in several discrete steps. This Pelobacter propionicus (strain DSM 2379 / NBRC 103807 / OttBd1) protein is Porphobilinogen deaminase.